The primary structure comprises 271 residues: Tryptophan synthase alpha chain (271 aa).

Active-site proton acceptor residues include Glu-56 and Asp-67.

This sequence belongs to the TrpA family. As to quaternary structure, tetramer of two alpha and two beta chains.

The enzyme catalyses (1S,2R)-1-C-(indol-3-yl)glycerol 3-phosphate + L-serine = D-glyceraldehyde 3-phosphate + L-tryptophan + H2O. It functions in the pathway amino-acid biosynthesis; L-tryptophan biosynthesis; L-tryptophan from chorismate: step 5/5. In terms of biological role, the alpha subunit is responsible for the aldol cleavage of indoleglycerol phosphate to indole and glyceraldehyde 3-phosphate. The chain is Tryptophan synthase alpha chain from Mycobacterium intracellulare.